The primary structure comprises 78 residues: Small ribosomal subunit protein eS21 (78 aa).

Belongs to the eukaryotic ribosomal protein eS21 family.

The chain is Small ribosomal subunit protein eS21 (rps21) from Dictyostelium discoideum (Social amoeba).